Here is a 415-residue protein sequence, read N- to C-terminus: Dihydroorotase (415 aa).

Residues histidine 54 and histidine 56 each contribute to the Zn(2+) site. Substrate is bound by residues 56-58 (HFR) and asparagine 88. Zn(2+)-binding residues include lysine 136, histidine 169, histidine 217, and aspartate 278. Residue lysine 136 is modified to N6-carboxylysine. The active site involves aspartate 278. Histidine 282 provides a ligand contact to substrate.

It belongs to the metallo-dependent hydrolases superfamily. DHOase family. Class I DHOase subfamily. Zn(2+) is required as a cofactor.

It catalyses the reaction (S)-dihydroorotate + H2O = N-carbamoyl-L-aspartate + H(+). Its pathway is pyrimidine metabolism; UMP biosynthesis via de novo pathway; (S)-dihydroorotate from bicarbonate: step 3/3. Catalyzes the reversible cyclization of carbamoyl aspartate to dihydroorotate. This Thermoplasma volcanium (strain ATCC 51530 / DSM 4299 / JCM 9571 / NBRC 15438 / GSS1) protein is Dihydroorotase.